We begin with the raw amino-acid sequence, 2104 residues long: MVKKVIEKGRGVRGRDYSSKVWDFLEIDALNYFSESLKNHYLEELVVSPASTAEPFIRLSDLRFLSLLFLRNLRHSIMRGSGVTLEMLMLLAIPIFMHCLSYKNSIDRGFVLAKVIDGGEGIRKKQTENYGNFSYDCFLQFKRFLSVGRDGKREILEPYYLGLNKDISISASSSKEEREIRYDVTTPLPSGRWKARIMRRDSLLFGGDRFKGKTEGIQVVRGGRYLQDLVRFFKFYKNLVVSKNGSDCHQNNFDSLLLREICDKQDLGRLQAIRLGNNSLSSVVLYPFESESADSADPRRDGSAFPSEQEVFSNLYSFTSREKTILFRNSISGLDYGEDEGGFPVLHAYSQVRNQLINRLTNFLSIIRKSNLPLGGKIVIDVSNRIKSERVFFPSGMKKNMPFTKISGKKLRLASGGYFDFVEIFPTYFKASLEIPRETTNQNGNTNFLDELEGGGNLDSIYSLVRLYGRNRIIPLYSTYIFLLHDYFCALSTEYFFRIKYWLDGWTGGRVYISFTGIATEETVFKWKDDVERLSNEYVTSHIGQCRNVQSNLYRRLDATRNLYVSPVKKFLGEAMKYNLAELICRVSLVGNELLNKTGVSLRSTNRHTKKYFHRFLDVLFLSKMIVAEATRQKILIDTVDYCIEKLDDIDFEKLNKMDRIELDFFSSLSDGYIDEEILLFKTILEERKSFLVESRLLTSEKSVGSSTALKPASNFTSLGLSCIEAIRAGFSGEALSIMGRQNWNLFVCDLSRGGNSIRNIGESLPKNISDQMDEINNSPIRSRAGNNFIQRIKRGFFVGNCSNSYLDVLENFYLSSDEKAISSSDILSLIHLQLSDSLSSNFSKQTAGEVADHLLTPIQLISPNLHESATIVTHLDGLPNSISDLNGLLASLSSSPREATDSFLFSCSNDGVSLEEASRNSDSWSDHQRTQPRRNLLVLDRVNSEKFFKDGLDSRNGSPTSQVYRNGLSIEYFWEPKKLDTPYWSLRFSLFNGVTSRFIAGSIGEDVTRQDAGFADSSAREEATCPSHFINFNELSEDLNRYKISWIFWRDSIGENWSLLGDYIPLFFTPTWWRYFCDLITKAYPEIVLKISYDSNHDLRRISEGIARGLVGSAKGYLLRSLQRLGLIFGNNSINTISSETDLLILEKIPDKAEILHPGEWSVSQFSNRPISYCCILSILLVLLSLKHPLSAVSGSNFFHLWKRFATIDYLTDPMRGSYLRKVMYSPPTSQMLTRDLLIHSLNRFLNCVSNILFFLFVKNEIDSWIFRRESSDILDSNKELLTQHLVTTKILYRYASKSKFNYDLSSNKIFHEPYPQDRSNVLAYLLQFWQNDLLGHKIRKLDPAEKWAFSALGRDILFSATTRRRDSLLNMPCRDIPISLQSGLLPSKGILLVGPVETGRSSLIRDVASNSYFPVVKLPLKKFIYNRSFFNNVRGNFISKESVHRLNIVFEIAKEMSPCTLWIQDIHELNICRSYNKLEADPKFLLCQILKSIGHKLGNSDIRENVVIATTHVPARIDPALVAPNRLNQLINFRRSNGRQRQKELSILLRIKGFEVGANPTLLESTVSGTAGYSKRDLLLLANEALLIGTSKGRKFVCSNTIGLALHRQHSTVSDMGNEMESNSEWEISSYKMAEVKNSLTDISLTTFPFIGRDELKMRFYYLSNWYVEPSTTESTIDEFTMFLHLPELIAKLVARDSFQMDRGKEDNFIVIDKLVENDLNLACGVLENLSNNFPRPEICRGESRRSNSFPPPLPIGKPKYCSGVTSLSRSSKSLKRGRISSLTDFEMQQSPELRNSAAEISREITWSRKAWRLRFLRSGTYELMGVLSEPNHLYNLILLYYNQNYIPQQDFEFSKIRGKRSKWREKSGYLFSFEKSVTNGTDNSIKRLENRLDNMLLREQFLELGISGDSSNEYETHCDRLNEMTRLFGGRFIWDPMLLFQPDPNIPSLRRNLLSTKELARRLHTIYGMRRQRLQKMSNNKIKDFFLYSEENPKLKPDSSLNRRNNLPLEEEERDSEYVRETSSVDIHLQYPQIFTPVRLGCYAVAEDFPERFLRFRLLVHRNKWLRRNRSPFRDFLIYNMLLETYEYLSNPFRFGKASLD.

G1396 to S1403 is an ATP binding site.

It belongs to the Ycf2 family.

It localises to the plastid. Its subcellular location is the chloroplast stroma. Probable ATPase of unknown function. Its presence in a non-photosynthetic plant (Epifagus virginiana) and experiments in tobacco indicate that it has an essential function which is probably not related to photosynthesis. This Adiantum capillus-veneris (Maidenhair fern) protein is Protein Ycf2 (ycf2-A).